A 48-amino-acid chain; its full sequence is Small polypeptide DEVIL 22 (48 aa).

The chain crosses the membrane as a helical span at residues 7 to 23 (KLNKGHAFTSKCASLVK). Residues 13-44 (AFTSKCASLVKEQRARLYILRRCATMLCCWYI) form a required for DVL/RTFL small polypeptide activity region.

It belongs to the DVL/RTFL small polypeptides family.

The protein resides in the cell membrane. In terms of biological role, small polypeptide acting as a regulatory molecule which coordinates cellular responses required for differentiation, growth and development, probably by restricting polar cell proliferation in lateral organs and coordinating socket cell recruitment and differentiation at trichome sites. In Arabidopsis thaliana (Mouse-ear cress), this protein is Small polypeptide DEVIL 22.